A 227-amino-acid polypeptide reads, in one-letter code: Thymidylate synthase (227 aa).

89–90 serves as a coordination point for dUMP; sequence RR. The active-site Nucleophile is Cys-109. DUMP contacts are provided by residues 129-132, Asn-140, and 170-172; these read RSND and HVY. Asp-132 contributes to the (6R)-5,10-methylene-5,6,7,8-tetrahydrofolate binding site.

This sequence belongs to the thymidylate synthase family. Bacterial-type ThyA subfamily. Homodimer.

Its subcellular location is the cytoplasm. It carries out the reaction dUMP + (6R)-5,10-methylene-5,6,7,8-tetrahydrofolate = 7,8-dihydrofolate + dTMP. Its pathway is pyrimidine metabolism; dTTP biosynthesis. In terms of biological role, catalyzes the reductive methylation of 2'-deoxyuridine-5'-monophosphate (dUMP) to 2'-deoxythymidine-5'-monophosphate (dTMP) while utilizing 5,10-methylenetetrahydrofolate (mTHF) as the methyl donor and reductant in the reaction, yielding dihydrofolate (DHF) as a by-product. This enzymatic reaction provides an intracellular de novo source of dTMP, an essential precursor for DNA biosynthesis. In Bacillus atrophaeus, this protein is Thymidylate synthase.